The primary structure comprises 360 residues: Cyclin-dependent kinase 10 (360 aa).

A Protein kinase domain is found at 39-323; sequence FEKLNRIGEG…SGDCLESSYF (285 aa). ATP contacts are provided by residues 45–53 and K68; that span reads IGEGTYGIV. D163 serves as the catalytic Proton acceptor. Phosphothreonine is present on T196. Positions 334-360 are disordered; the sequence is LMPTFPHHRNKRAAPAAAEGQSKRCRP.

It belongs to the protein kinase superfamily. CMGC Ser/Thr protein kinase family. CDC2/CDKX subfamily. As to quaternary structure, heterodimer with CCNQ, the interaction is required for kinase activity. Interacts with ETS2. Interacts with PRK2.

Its subcellular location is the cytoplasm. The protein localises to the cytoskeleton. The protein resides in the cilium basal body. It catalyses the reaction L-seryl-[protein] + ATP = O-phospho-L-seryl-[protein] + ADP + H(+). It carries out the reaction L-threonyl-[protein] + ATP = O-phospho-L-threonyl-[protein] + ADP + H(+). In terms of biological role, cyclin-dependent kinase that phosphorylates the transcription factor ETS2 (in vitro) and positively controls its proteasomal degradation (in cells). Involved in the regulation of actin cytoskeleton organization through the phosphorylation of actin dynamics regulators such as PKN2. Is a negative regulator of ciliogenesis through phosphorylation of PKN2 and promotion of RhoA signaling. This chain is Cyclin-dependent kinase 10 (Cdk10), found in Mus musculus (Mouse).